The primary structure comprises 637 residues: Cell division cycle-related protein res1/sct1 (637 aa).

The HTH APSES-type domain maps to 6 to 112 (IHKITYSGVE…YSGSAFMPMS (107 aa)). The segment at residues 37-58 (ATQILKIAELDKPRRTRILEKF) is a DNA-binding region (H-T-H motif). The disordered stretch occupies residues 114-137 (FTPQSNRKPTEAYRRNSPVKKSFS). ANK repeat units follow at residues 236–265 (DGHTALHWAAAMGNLEMMHALLQAGANVVA) and 357–386 (HGDTALLICARNGAKKCARLLLSFYASSSI).

As to quaternary structure, DSC1 contains cdc10 and sct1/res1.

Acts as a positive regulator of the mitotic cell cycle and as a negative regulator of sexual differentiation. May be involved in the transcriptional regulation of the cdc22 and cdt1 genes. Is an integral component of the DSC1-like complex. This chain is Cell division cycle-related protein res1/sct1 (res1), found in Schizosaccharomyces pombe (strain 972 / ATCC 24843) (Fission yeast).